A 314-amino-acid chain; its full sequence is Nodulation protein D 1 (314 aa).

Residues 6-63 (LDLNLLVALDALMTERNLTAAARSINLSQPAMSAAVGRLRTYFNDDLFTMVGRELVPT) form the HTH lysR-type domain. The segment at residues 23 to 42 (LTAAARSINLSQPAMSAAVG) is a DNA-binding region (H-T-H motif).

The protein belongs to the LysR transcriptional regulatory family.

Functionally, nodD regulates the expression of the nodABCFE genes which encode other nodulation proteins. NodD is also a negative regulator of its own expression. Binds flavonoids as inducers. The chain is Nodulation protein D 1 (nodD1) from Rhizobium leguminosarum bv. phaseoli.